We begin with the raw amino-acid sequence, 340 residues long: Flap endonuclease 1 (340 aa).

Residues 1-98 form an N-domain region; the sequence is MGLNLKDLVV…AEIERRKQIK (98 aa). Mg(2+) is bound by residues Asp27, Asp80, Glu152, Glu154, Asp173, Asp175, and Asp236. The I-domain stretch occupies residues 116–258; sequence DARKYAQQTT…TALKMIKQHS (143 aa).

It belongs to the XPG/RAD2 endonuclease family. FEN1 subfamily. Interacts with PCNA. PCNA stimulates the nuclease activity without altering cleavage specificity. The cofactor is Mg(2+).

Structure-specific nuclease with 5'-flap endonuclease and 5'-3' exonuclease activities involved in DNA replication and repair. During DNA replication, cleaves the 5'-overhanging flap structure that is generated by displacement synthesis when DNA polymerase encounters the 5'-end of a downstream Okazaki fragment. Binds the unpaired 3'-DNA end and kinks the DNA to facilitate 5' cleavage specificity. Cleaves one nucleotide into the double-stranded DNA from the junction in flap DNA, leaving a nick for ligation. Also involved in the base excision repair (BER) pathway. Acts as a genome stabilization factor that prevents flaps from equilibrating into structures that lead to duplications and deletions. Also possesses 5'-3' exonuclease activity on nicked or gapped double-stranded DNA. The protein is Flap endonuclease 1 of Nitrosopumilus maritimus (strain SCM1).